A 634-amino-acid polypeptide reads, in one-letter code: Chaperone protein HtpG (634 aa).

Positions 1–345 (MEHQQNHTFS…SNDLPLNVSR (345 aa)) are a; substrate-binding. Residues 346–562 (EILQDTRVTA…NDDMSTQMAK (217 aa)) are b. The interval 563 to 634 (LMAQMGQPVP…VGRINKLLLA (72 aa)) is c.

This sequence belongs to the heat shock protein 90 family. In terms of assembly, homodimer.

It is found in the cytoplasm. Molecular chaperone. Has ATPase activity. This is Chaperone protein HtpG from Psychromonas ingrahamii (strain DSM 17664 / CCUG 51855 / 37).